The primary structure comprises 75 residues: MVVIRLARFGRKKRPFYRIVVTDSRKRRDSGWIESIGYYNPLTDPVTVKIDEERLNYWLGVGAKMSERVKKLSGK.

This sequence belongs to the bacterial ribosomal protein bS16 family.

This Nitratiruptor sp. (strain SB155-2) protein is Small ribosomal subunit protein bS16.